Consider the following 158-residue polypeptide: 2-C-methyl-D-erythritol 2,4-cyclodiphosphate synthase (158 aa).

A divalent metal cation-binding residues include Asp8 and His10. 4-CDP-2-C-methyl-D-erythritol 2-phosphate-binding positions include 8 to 10 (DVH) and 34 to 35 (HS). A divalent metal cation is bound at residue His42. 4-CDP-2-C-methyl-D-erythritol 2-phosphate contacts are provided by residues 56–58 (DIG), 132–135 (TTNE), and Arg142.

It belongs to the IspF family. In terms of assembly, homotrimer. A divalent metal cation serves as cofactor.

It carries out the reaction 4-CDP-2-C-methyl-D-erythritol 2-phosphate = 2-C-methyl-D-erythritol 2,4-cyclic diphosphate + CMP. The protein operates within isoprenoid biosynthesis; isopentenyl diphosphate biosynthesis via DXP pathway; isopentenyl diphosphate from 1-deoxy-D-xylulose 5-phosphate: step 4/6. In terms of biological role, involved in the biosynthesis of isopentenyl diphosphate (IPP) and dimethylallyl diphosphate (DMAPP), two major building blocks of isoprenoid compounds. Catalyzes the conversion of 4-diphosphocytidyl-2-C-methyl-D-erythritol 2-phosphate (CDP-ME2P) to 2-C-methyl-D-erythritol 2,4-cyclodiphosphate (ME-CPP) with a corresponding release of cytidine 5-monophosphate (CMP). This is 2-C-methyl-D-erythritol 2,4-cyclodiphosphate synthase from Chlorobium phaeobacteroides (strain DSM 266 / SMG 266 / 2430).